The chain runs to 254 residues: Translation initiation factor 2 subunit alpha (254 aa).

An S1 motif domain is found at 10–81 (GDLVVVKITE…ERKVVDLSLK (72 aa)).

This sequence belongs to the eIF-2-alpha family. Heterotrimer composed of an alpha, a beta and a gamma chain.

Its function is as follows. eIF-2 functions in the early steps of protein synthesis by forming a ternary complex with GTP and initiator tRNA. The chain is Translation initiation factor 2 subunit alpha from Thermoplasma acidophilum (strain ATCC 25905 / DSM 1728 / JCM 9062 / NBRC 15155 / AMRC-C165).